We begin with the raw amino-acid sequence, 418 residues long: Gamma-glutamyl phosphate reductase (418 aa).

Belongs to the gamma-glutamyl phosphate reductase family.

The protein resides in the cytoplasm. The catalysed reaction is L-glutamate 5-semialdehyde + phosphate + NADP(+) = L-glutamyl 5-phosphate + NADPH + H(+). The protein operates within amino-acid biosynthesis; L-proline biosynthesis; L-glutamate 5-semialdehyde from L-glutamate: step 2/2. In terms of biological role, catalyzes the NADPH-dependent reduction of L-glutamate 5-phosphate into L-glutamate 5-semialdehyde and phosphate. The product spontaneously undergoes cyclization to form 1-pyrroline-5-carboxylate. This Desulfosudis oleivorans (strain DSM 6200 / JCM 39069 / Hxd3) (Desulfococcus oleovorans) protein is Gamma-glutamyl phosphate reductase.